We begin with the raw amino-acid sequence, 649 residues long: Vitamin K-dependent protein S (649 aa).

A propeptide spanning residues 1-14 is cleaved from the precursor; sequence SKQQASQVLVRKRR. Residues 15–60 form the Gla domain; the sequence is ANSMLEETKQGNLERECIEELCNKEEAREVFENDPETDYFYPKYLV. 4-carboxyglutamate is present on residues glutamate 20, glutamate 21, glutamate 28, glutamate 30, glutamate 33, glutamate 34, glutamate 39, glutamate 40, glutamate 43, glutamate 46, and glutamate 50. An intrachain disulfide couples cysteine 31 to cysteine 36. Residues 61–89 form a thrombin-sensitive region; that stretch reads CLRSFQSGLFTAARQSTDAYPDLRSCVNA. The region spanning 90-128 is the EGF-like 1 domain; sequence IPDQCSPLPCNEDGYMSCKDGKASFTCTCKPGWQGERCE. Disulfide bonds link cysteine 94–cysteine 107, cysteine 99–cysteine 116, cysteine 118–cysteine 127, cysteine 134–cysteine 148, cysteine 144–cysteine 157, cysteine 159–cysteine 172, cysteine 178–cysteine 190, cysteine 185–cysteine 199, cysteine 201–cysteine 214, cysteine 220–cysteine 229, cysteine 225–cysteine 238, cysteine 240–cysteine 255, and cysteine 422–cysteine 448. Aspartate 109 is modified ((3R)-3-hydroxyaspartate). An EGF-like 2; calcium-binding domain is found at 130–173; it reads DINECKDPSNINGGCSQICDNTPGSYHCSCKSGFVMLSNKKDCK. An EGF-like 3; calcium-binding domain is found at 174–215; that stretch reads DVDECSLKPNMCGTAVCKNIPGDFECECPEGYRYNLKSKSCE. An EGF-like 4; calcium-binding domain is found at 216-256; that stretch reads DVDECSENMCAQLCVNYPGGYTCYCDGKKGFKLAQDQKSCE. 2 Laminin G-like domains span residues 272 to 448 and 457 to 639; these read LLYL…NKHC and YYPG…AHSC. N-linked (GlcNAc...) asparagine glycosylation is found at asparagine 472, asparagine 482, and asparagine 503. An intrachain disulfide couples cysteine 612 to cysteine 639.

In terms of processing, the iron and 2-oxoglutarate dependent 3-hydroxylation of aspartate and asparagine is (R) stereospecific within EGF domains. As to expression, plasma.

Its subcellular location is the secreted. Anticoagulant plasma protein; it is a cofactor to activated protein C in the degradation of coagulation factors Va and VIIIa. It helps to prevent coagulation and stimulating fibrinolysis. This is Vitamin K-dependent protein S (PROS1) from Macaca mulatta (Rhesus macaque).